The chain runs to 304 residues: Protease HtpX homolog (304 aa).

Helical transmembrane passes span 19–39 (FIVF…VSYF) and 41–61 (LGEI…YYAY). A Zn(2+)-binding site is contributed by His-146. Residue Glu-147 is part of the active site. Residue His-150 participates in Zn(2+) binding. 2 helical membrane-spanning segments follow: residues 156-176 (VRLQ…GDGL) and 192-212 (NILG…ATLL). Glu-221 lines the Zn(2+) pocket.

Belongs to the peptidase M48B family. The cofactor is Zn(2+).

It is found in the cell inner membrane. The protein is Protease HtpX homolog of Dictyoglomus turgidum (strain DSM 6724 / Z-1310).